The following is an 87-amino-acid chain: MNLEPPKAEIRSATRVIGGPVTPRKGPPKFKQRQTRQFKSKPPKKGVQGFGDDIPGMEGLGTDITVICPWEAFNHLELHELAQYGII.

N-acetylmethionine is present on Met1. A compositionally biased stretch (basic and acidic residues) spans 1–12; that stretch reads MNLEPPKAEIRS. Residues 1–55 form a disordered region; it reads MNLEPPKAEIRSATRVIGGPVTPRKGPPKFKQRQTRQFKSKPPKKGVQGFGDDIP. The span at 26 to 44 shows a compositional bias: basic residues; the sequence is GPPKFKQRQTRQFKSKPPK.

Belongs to the rod/cone cGMP-PDE gamma subunit family. As to quaternary structure, oligomer composed of two catalytic chains (alpha and beta), an inhibitory chain (gamma) and the delta chain.

It carries out the reaction 3',5'-cyclic GMP + H2O = GMP + H(+). Its function is as follows. Participates in processes of transmission and amplification of the visual signal. cGMP-PDEs are the effector molecules in G-protein-mediated phototransduction in vertebrate rods and cones. In Canis lupus familiaris (Dog), this protein is Retinal rod rhodopsin-sensitive cGMP 3',5'-cyclic phosphodiesterase subunit gamma (PDE6G).